A 121-amino-acid chain; its full sequence is Small ribosomal subunit protein uS13 (121 aa).

A disordered region spans residues 94–121 (GLPLRGQRTRTNARTRKGPRKAGVALKK).

It belongs to the universal ribosomal protein uS13 family. In terms of assembly, part of the 30S ribosomal subunit. Forms a loose heterodimer with protein S19. Forms two bridges to the 50S subunit in the 70S ribosome.

In terms of biological role, located at the top of the head of the 30S subunit, it contacts several helices of the 16S rRNA. In the 70S ribosome it contacts the 23S rRNA (bridge B1a) and protein L5 of the 50S subunit (bridge B1b), connecting the 2 subunits; these bridges are implicated in subunit movement. Contacts the tRNAs in the A and P-sites. In Ralstonia nicotianae (strain ATCC BAA-1114 / GMI1000) (Ralstonia solanacearum), this protein is Small ribosomal subunit protein uS13.